Here is a 450-residue protein sequence, read N- to C-terminus: Glucose-6-phosphate isomerase (450 aa).

At threonine 39 the chain carries Phosphothreonine. Catalysis depends on glutamate 291, which acts as the Proton donor. Catalysis depends on residues histidine 312 and lysine 426.

The protein belongs to the GPI family.

The protein localises to the cytoplasm. The catalysed reaction is alpha-D-glucose 6-phosphate = beta-D-fructose 6-phosphate. The protein operates within carbohydrate biosynthesis; gluconeogenesis. It participates in carbohydrate degradation; glycolysis; D-glyceraldehyde 3-phosphate and glycerone phosphate from D-glucose: step 2/4. Its function is as follows. Catalyzes the reversible isomerization of glucose-6-phosphate to fructose-6-phosphate. The polypeptide is Glucose-6-phosphate isomerase (Bacillus anthracis).